The primary structure comprises 419 residues: Phosphatidylcholine:ceramide cholinephosphotransferase 1 (419 aa).

Positions 13-76 (WSPKKVADWL…LDMIETLKME (64 aa)) constitute an SAM domain. Phosphoserine is present on S14. The next 5 helical transmembrane spans lie at 142-162 (FLAFLYALSCFVLTTVMISVV), 190-210 (FSICEINGMILVGLWLFQWLL), 221-241 (FFCIVGTLYLYRCITMYVTTL), 282-302 (MCGDYLYSGHTVMLTLTYLFI), and 310-330 (LWWYHWICWLLSVVGIFCILL). H291 is an active-site residue. At 331–419 (AHDHYTVDVV…VKYSRLVNDT (89 aa)) the chain is on the cytoplasmic side. Catalysis depends on residues H334 and D338.

This sequence belongs to the sphingomyelin synthase family. In terms of tissue distribution, isoform 1 is widely expressed, isoform 2 shows a more narrow distribution and isoform 3 is detected only in testis and heart.

It localises to the golgi apparatus membrane. It catalyses the reaction an N-acylsphing-4-enine + a 1,2-diacyl-sn-glycero-3-phosphocholine = a sphingomyelin + a 1,2-diacyl-sn-glycerol. The enzyme catalyses 1-(9Z-octadecenoyl)-2-acyl-sn-3-glycerol + a sphingomyelin = a 1-(9Z-octadecenoyl)-2-acyl-sn-glycero-3-phosphocholine + an N-acylsphing-4-enine. The catalysed reaction is N-hexadecanoylsphinganine + a 1,2-diacyl-sn-glycero-3-phosphocholine = N-hexadecanoyl-sphinganine-1-phosphocholine + a 1,2-diacyl-sn-glycerol. It carries out the reaction N-hexadecanoyl-(4R)-hydroxysphinganine + a 1,2-diacyl-sn-glycero-3-phosphocholine = N-hexadecanoyl-(4R)-hydroxysphinganine-phosphocholine + a 1,2-diacyl-sn-glycerol. It catalyses the reaction an N-acylsphing-4-enine + a 1,2-diacyl-sn-glycero-3-phosphoethanolamine = an N-acylsphing-4-enine 1-phosphoethanolamine + a 1,2-diacyl-sn-glycerol. It participates in sphingolipid metabolism. Functionally, major sphingomyelin synthase at the Golgi apparatus. Catalyzes the reversible transfer of phosphocholine moiety in sphingomyelin biosynthesis: in the forward reaction transfers phosphocholine head group of phosphatidylcholine (PC) on to ceramide (CER) to form ceramide phosphocholine (sphingomyelin, SM) and diacylglycerol (DAG) as by-product, and in the reverse reaction transfers phosphocholine from SM to DAG to form PC and CER. The direction of the reaction depends on the levels of CER and DAG in Golgi membranes. Converts the newly synthesized CER, that is transported from the endoplasmic reticulum to the trans-Golgi by the Cer transport protein (CERT), to SM. Can form a heteromeric complex with glucosylceramide synthase (GCS) increasing SMS activity and reducing glucosylceramide synthesis, a critical mechanism that controls the metabolic fate of CER in the Golgi. Does not use free phosphorylcholine or CDP-choline as donor. Can also transfer phosphoethanolamine head group of phosphatidylethanolamine (PE) on to CER to form ceramide phosphoethanolamine (CPE). Regulates receptor-mediated signal transduction via mitogenic DAG and proapoptotic CER, as well as via SM, a structural component of membrane rafts that serve as platforms for signal transduction and protein sorting. Plays a role in secretory transport via regulation of DAG pool at the Golgi apparatus and its downstream effects on PRKD1. In terms of biological role, (Microbial infection) Contributes to the brain SM production for Japanese encephalitis virus attachment and infection. The sequence is that of Phosphatidylcholine:ceramide cholinephosphotransferase 1 (Sgms1) from Mus musculus (Mouse).